A 184-amino-acid polypeptide reads, in one-letter code: Ribosome-recycling factor (184 aa).

It belongs to the RRF family.

It localises to the cytoplasm. Its function is as follows. Responsible for the release of ribosomes from messenger RNA at the termination of protein biosynthesis. May increase the efficiency of translation by recycling ribosomes from one round of translation to another. The sequence is that of Ribosome-recycling factor from Lachnoclostridium phytofermentans (strain ATCC 700394 / DSM 18823 / ISDg) (Clostridium phytofermentans).